A 104-amino-acid chain; its full sequence is L-rhamnose mutarotase (104 aa).

A substrate-binding site is contributed by tyrosine 18. The active-site Proton donor is the histidine 22. Substrate contacts are provided by residues tyrosine 41 and 76–77 (WW).

This sequence belongs to the rhamnose mutarotase family. In terms of assembly, homodimer.

It localises to the cytoplasm. The enzyme catalyses alpha-L-rhamnose = beta-L-rhamnose. The protein operates within carbohydrate metabolism; L-rhamnose metabolism. Its function is as follows. Involved in the anomeric conversion of L-rhamnose. The sequence is that of L-rhamnose mutarotase from Escherichia coli O1:K1 / APEC.